The primary structure comprises 751 residues: Photosystem I P700 chlorophyll a apoprotein A1 (751 aa).

Helical transmembrane passes span 71 to 94 (VFSA…FHGA), 157 to 180 (LYCT…FHYH), 196 to 220 (LNHH…HVSL), 292 to 310 (TAHH…GHMY), 347 to 370 (WHAQ…HHMY), 386 to 412 (LSLF…IFLV), 434 to 456 (AIIS…LYIH), and 532 to 550 (FLVH…LILL). [4Fe-4S] cluster contacts are provided by Cys-574 and Cys-583. 2 consecutive transmembrane segments (helical) span residues 590–611 (HVFL…HFSW) and 665–687 (LSAY…MFLF). Chlorophyll a' is bound at residue His-676. The chlorophyll a site is built by Met-684 and Tyr-692. Trp-693 serves as a coordination point for phylloquinone. Residues 725–745 (AVGVAHYLLGGIVTTWAFFLA) form a helical membrane-spanning segment.

The protein belongs to the PsaA/PsaB family. In terms of assembly, the PsaA/B heterodimer binds the P700 chlorophyll special pair and subsequent electron acceptors. PSI consists of a core antenna complex that captures photons, and an electron transfer chain that converts photonic excitation into a charge separation. The eukaryotic PSI reaction center is composed of at least 11 subunits. The cofactor is P700 is a chlorophyll a/chlorophyll a' dimer, A0 is one or more chlorophyll a, A1 is one or both phylloquinones and FX is a shared 4Fe-4S iron-sulfur center..

It is found in the plastid. It localises to the chloroplast thylakoid membrane. The enzyme catalyses reduced [plastocyanin] + hnu + oxidized [2Fe-2S]-[ferredoxin] = oxidized [plastocyanin] + reduced [2Fe-2S]-[ferredoxin]. PsaA and PsaB bind P700, the primary electron donor of photosystem I (PSI), as well as the electron acceptors A0, A1 and FX. PSI is a plastocyanin-ferredoxin oxidoreductase, converting photonic excitation into a charge separation, which transfers an electron from the donor P700 chlorophyll pair to the spectroscopically characterized acceptors A0, A1, FX, FA and FB in turn. Oxidized P700 is reduced on the lumenal side of the thylakoid membrane by plastocyanin. The chain is Photosystem I P700 chlorophyll a apoprotein A1 from Welwitschia mirabilis (Tree tumbo).